Reading from the N-terminus, the 424-residue chain is MQKFRVYGQSRLNGEVNISGAKNAALPILFAAILAEEPVKLTNVPELKDIDTTLKILQQLGVVTYRDEQGAVHLDASNINHFVAPYELVKTMRASIWALAPLVSRFKQGQVSLPGGCSIGARPVDLHISGLERLGAKIVLEEGYVKAFVDGQLIGKRIVIEKVSVGATLSIMIAATLAKGITVIENAAREPEITDTAVFLNKMGAKISGAGSDIITIEGVERLGGCEHSIVPDRIETGTFLVAAAISGGRIICKNTKASTLDAVIDKLRDAGAKIEVTENTITLDMQGNRPKAVNIRTEPYPGFPTDMQAQFTLLNMVAEGSSKITETIFENRFMHIPELIRMGGKAEIEGNTAFCHGVEYLSGAEVMATDLRASISLVLAGCIATGETIVDRIYHIDRGYEHIEKKLRGLGAKIERFTEKIVD.

Phosphoenolpyruvate is bound at residue 22-23; the sequence is KN. R93 provides a ligand contact to UDP-N-acetyl-alpha-D-glucosamine. The Proton donor role is filled by C117. C117 carries the 2-(S-cysteinyl)pyruvic acid O-phosphothioketal modification. UDP-N-acetyl-alpha-D-glucosamine-binding positions include 122–126, 162–165, D307, and I329; these read RPVDL and KVSV.

Belongs to the EPSP synthase family. MurA subfamily.

Its subcellular location is the cytoplasm. The enzyme catalyses phosphoenolpyruvate + UDP-N-acetyl-alpha-D-glucosamine = UDP-N-acetyl-3-O-(1-carboxyvinyl)-alpha-D-glucosamine + phosphate. The protein operates within cell wall biogenesis; peptidoglycan biosynthesis. In terms of biological role, cell wall formation. Adds enolpyruvyl to UDP-N-acetylglucosamine. This Histophilus somni (strain 129Pt) (Haemophilus somnus) protein is UDP-N-acetylglucosamine 1-carboxyvinyltransferase.